Here is an 80-residue protein sequence, read N- to C-terminus: MIELSWYQFKSLMTNVKVVIQENPGPENITIREKASKIVYSLEEIQKDIESMAKFIDEPINKVYIQDYTVGQIRDLARKI.

This is an uncharacterized protein from Enterobacteria phage T4 (Bacteriophage T4).